Consider the following 130-residue polypeptide: MMTRPRIALIAHDHKKDDIVAFATRHREFLSQCELLATGTTGGRLIDEVKLDVTRMLSGPWGGDLQIGAQLAEGRVRAVIFLRDPMTPQPHEPDINALVRACDVHNVPCATNVATADLLIAELSRVEAQP.

One can recognise an MGS-like domain in the interval 1–130 (MMTRPRIALI…AELSRVEAQP (130 aa)). Substrate-binding positions include H12, K16, 38 to 41 (TGTT), and 58 to 59 (SG). D64 acts as the Proton donor/acceptor in catalysis. Position 91 (H91) interacts with substrate.

Belongs to the methylglyoxal synthase family.

It carries out the reaction dihydroxyacetone phosphate = methylglyoxal + phosphate. Its function is as follows. Catalyzes the formation of methylglyoxal from dihydroxyacetone phosphate. The polypeptide is Methylglyoxal synthase (Cupriavidus pinatubonensis (strain JMP 134 / LMG 1197) (Cupriavidus necator (strain JMP 134))).